The sequence spans 272 residues: uncharacterized protein (272 aa).

Active-site residues include Asp71 and Glu163.

This sequence belongs to the glycosyl hydrolase 25 family.

This is an uncharacterized protein from Escherichia coli (strain K12).